The primary structure comprises 143 residues: Peptidyl-prolyl cis-trans isomerase FKBP15-3 (143 aa).

Residues 56–143 (GKRVSVHYTG…VFDVELLNVK (88 aa)) form the PPIase FKBP-type domain.

This sequence belongs to the FKBP-type PPIase family.

It carries out the reaction [protein]-peptidylproline (omega=180) = [protein]-peptidylproline (omega=0). Its function is as follows. PPIases accelerate the folding of proteins. It catalyzes the cis-trans isomerization of proline imidic peptide bonds in oligopeptides. In Arabidopsis thaliana (Mouse-ear cress), this protein is Peptidyl-prolyl cis-trans isomerase FKBP15-3 (FKBP15-3).